The primary structure comprises 273 residues: Transposable element Tcb2 transposase (273 aa).

The protein belongs to the transposase 5 family.

Its subcellular location is the nucleus. Functionally, probably essential for transposable element Tcb2 transposition. The protein is Transposable element Tcb2 transposase of Caenorhabditis briggsae.